A 343-amino-acid chain; its full sequence is 4-hydroxy-2-oxovalerate aldolase (343 aa).

Positions 5–256 (ILLCDPTLRD…ETGIDLYKIL (252 aa)) constitute a Pyruvate carboxyltransferase domain. Residue 13–14 (RD) coordinates substrate. Aspartate 14 contacts Mn(2+). Histidine 17 acts as the Proton acceptor in catalysis. The substrate site is built by serine 168 and histidine 195. Histidine 195 and histidine 197 together coordinate Mn(2+).

The protein belongs to the 4-hydroxy-2-oxovalerate aldolase family. In terms of assembly, interacts with MhpF.

The catalysed reaction is (S)-4-hydroxy-2-oxopentanoate = acetaldehyde + pyruvate. It functions in the pathway aromatic compound metabolism; 3-phenylpropanoate degradation. Catalyzes the retro-aldol cleavage of 4-hydroxy-2-oxopentanoate to pyruvate and acetaldehyde. Is involved in the meta-cleavage pathway for the degradation of aromatic compounds. The protein is 4-hydroxy-2-oxovalerate aldolase of Pectobacterium atrosepticum (strain SCRI 1043 / ATCC BAA-672) (Erwinia carotovora subsp. atroseptica).